We begin with the raw amino-acid sequence, 202 residues long: MNFLKKMIKSCKDEETQKYPSASAPPDDDDIWMPPPEYVPLTQVKGKASVRNFCISGEVKICSPNGYSFKILRHILKSFDNVYSGNRRMIGLVKVVIGLVLSGSPVPEGMNWVYKLRRTLIFQWAESHGPLEGEELEYSQEITWDDEAEFVGLQIRVSARQCHIQGRLWCINMNSRACQLWADMILQTQQSPDDENTSLLLE.

The PPXY motif signature appears at 35 to 38 (PPEY). An essential for glycoprotein binding region spans residues 115-151 (KLRRTLIFQWAESHGPLEGEELEYSQEITWDDEAEFV).

The protein belongs to the lyssavirus matrix protein family. As to quaternary structure, homomultimer. Interacts with nucleoprotein and with the cytoplasmic domain of glycoprotein.

It localises to the virion membrane. It is found in the host endomembrane system. In terms of biological role, plays a major role in assembly and budding of virion. Completely covers the ribonucleoprotein coil and keep it in condensed bullet-shaped form. Inhibits viral transcription and stimulates replication. Plays a major role in early induction of TRAIL-mediated apoptosis in infected neurons. This is Matrix protein (M) from Mokola virus (MOKV).